The following is a 513-amino-acid chain: Nuclear pore complex protein NUP58 (513 aa).

Disordered stretches follow at residues 28-62 (QTNS…QPQQ), 217-239 (SVGS…GQQQ), and 356-513 (RETA…TTRR). Residues 30–50 (NSIFSQSQPQQTNSIFSQSQP) show a composition bias toward polar residues. 2 stretches are compositionally biased toward low complexity: residues 51 to 62 (QQTNSIFSQPQQ) and 217 to 227 (SVGSQPSQGQG). The span at 356–365 (RETAKQEAAA) shows a compositional bias: basic and acidic residues. Residues 377-386 (STTSTQPSTQ) are compositionally biased toward low complexity. Positions 393-427 (SSATPGGSNPPQTSVPTSNPSSGAGFSFLNTPASG) are enriched in polar residues. Over residues 428 to 446 (PSSSLFATPSSTAPTSSLF) the composition is skewed to low complexity. 6 consecutive repeat copies span residues 446–447 (FG), 458–459 (FG), 466–467 (FG), 473–474 (FG), 486–487 (FG), and 497–498 (FG). The segment at 446–498 (FGPSPTPTQTPLFGSSPASTFGSTQSLFGQTTPSLTMPSQFGGATPGSGASFG) is 6 X 2 AA repeats of F-G. Polar residues predominate over residues 452–484 (PTQTPLFGSSPASTFGSTQSLFGQTTPSLTMPS). Basic residues predominate over residues 504 to 513 (SRPKSRTTRR).

The protein belongs to the NUP58 family. Part of the nuclear pore complex (NPC). The NPC has an eight-fold symmetrical structure comprising a central transport channel and two rings, the cytoplasmic and nuclear rings, to which eight filaments are attached. The cytoplasmic filaments have loose ends, while the nuclear filaments are joined in a distal ring, forming a nuclear basket. NPCs are highly dynamic in configuration and composition, and can be devided in 3 subcomplexes, the NUP62 subcomplex, the NUP107-160 subcomplex and the NUP93 subcomplex, containing approximately 30 different nucleoporin proteins. Interacts with GAI, NUP62, SKP1A and SKP1B. Ubiquitous. Higherst expression in cauline leaves, lowest in roots.

The protein localises to the nucleus envelope. The protein resides in the nucleus. It is found in the nuclear pore complex. Functionally, involved in nucleocytoplasmic trafficking. May have regulatory roles in the gibberellin pathway, in auxin signaling and in light perception. The polypeptide is Nuclear pore complex protein NUP58 (Arabidopsis thaliana (Mouse-ear cress)).